Consider the following 262-residue polypeptide: Phosphatidylglycerol--prolipoprotein diacylglyceryl transferase (262 aa).

A run of 4 helical transmembrane segments spans residues 9 to 29 (LGPL…ILAV), 41 to 61 (IIPD…ILGA), 80 to 100 (IFAI…GALV), and 109 to 129 (LINT…AQSL). Arginine 131 serves as a coordination point for a 1,2-diacyl-sn-glycero-3-phospho-(1'-sn-glycerol). 3 helical membrane passes run 167–187 (QPTF…ILIF), 197–217 (GHIT…IEGM), and 227–247 (LRVS…IVIY).

This sequence belongs to the Lgt family.

The protein resides in the cell membrane. It catalyses the reaction L-cysteinyl-[prolipoprotein] + a 1,2-diacyl-sn-glycero-3-phospho-(1'-sn-glycerol) = an S-1,2-diacyl-sn-glyceryl-L-cysteinyl-[prolipoprotein] + sn-glycerol 1-phosphate + H(+). The protein operates within protein modification; lipoprotein biosynthesis (diacylglyceryl transfer). Catalyzes the transfer of the diacylglyceryl group from phosphatidylglycerol to the sulfhydryl group of the N-terminal cysteine of a prolipoprotein, the first step in the formation of mature lipoproteins. This chain is Phosphatidylglycerol--prolipoprotein diacylglyceryl transferase, found in Streptococcus pneumoniae (strain JJA).